Reading from the N-terminus, the 474-residue chain is Probable protein phosphatase 2C 37 (474 aa).

The segment at 1-90 is disordered; that stretch reads MVMASAGVNM…RDDDGCSSTA (90 aa). Residues 57 to 77 show a composition bias toward low complexity; the sequence is LPASSASPSPSPTSSAASSDC. Residues 113-470 enclose the PPM-type phosphatase domain; it reads AFGSVSLAGR…DNISVVVIDL (358 aa). Residues Asp152, Gly153, and Asp387 each coordinate Mn(2+). The segment at 406-434 is disordered; sequence LEDGSPTSGRRAARSGEAASSSAGAPAAA. Residues 420–434 show a composition bias toward low complexity; that stretch reads SGEAASSSAGAPAAA. Position 461 (Asp461) interacts with Mn(2+).

Belongs to the PP2C family. The cofactor is Mg(2+). Mn(2+) serves as cofactor.

The enzyme catalyses O-phospho-L-seryl-[protein] + H2O = L-seryl-[protein] + phosphate. It carries out the reaction O-phospho-L-threonyl-[protein] + H2O = L-threonyl-[protein] + phosphate. The protein is Probable protein phosphatase 2C 37 of Oryza sativa subsp. japonica (Rice).